A 183-amino-acid polypeptide reads, in one-letter code: Putative manganese efflux pump MntP 1 (183 aa).

6 helical membrane-spanning segments follow: residues leucine 6 to isoleucine 26, methionine 36 to isoleucine 56, isoleucine 64 to isoleucine 84, isoleucine 100 to threonine 120, leucine 130 to isoleucine 150, and isoleucine 158 to leucine 178.

This sequence belongs to the MntP (TC 9.B.29) family.

Its subcellular location is the cell membrane. In terms of biological role, probably functions as a manganese efflux pump. The sequence is that of Putative manganese efflux pump MntP 1 from Clostridium botulinum (strain Hall / ATCC 3502 / NCTC 13319 / Type A).